The primary structure comprises 136 residues: Ig heavy chain V region XIG8 (136 aa).

An N-terminal signal peptide occupies residues 1 to 18 (GFGIFVIFMFFSPSCILS). Positions 19–128 (QTLQESGPGT…TAGYFEHWGQ (110 aa)) constitute an Ig-like domain.

The chain is Ig heavy chain V region XIG8 from Xenopus laevis (African clawed frog).